The following is an 802-amino-acid chain: Bifunctional purine biosynthetic protein ADE5,7 (802 aa).

The GARS stretch occupies residues 1–450 (MLNILVLGNG…QNSESSKVAI (450 aa)). An ATP-grasp domain is found at 114 to 330 (KRFMSKHNIP…LAQVFLAAAE (217 aa)). 141–203 (QAHTDKAFVI…EQFLEGDEIS (63 aa)) serves as a coordination point for ATP. Positions 298 and 300 each coordinate Mg(2+). Positions 451–802 (TYADSGVSVD…CVIENGTKLY (352 aa)) are AIRS. 2 positions are modified to phosphoserine: serine 455 and serine 458.

This sequence in the N-terminal section; belongs to the GARS family. In the C-terminal section; belongs to the AIR synthase family. It depends on Mg(2+) as a cofactor. The cofactor is Mn(2+).

It is found in the cytoplasm. It carries out the reaction 5-phospho-beta-D-ribosylamine + glycine + ATP = N(1)-(5-phospho-beta-D-ribosyl)glycinamide + ADP + phosphate + H(+). It catalyses the reaction 2-formamido-N(1)-(5-O-phospho-beta-D-ribosyl)acetamidine + ATP = 5-amino-1-(5-phospho-beta-D-ribosyl)imidazole + ADP + phosphate + H(+). It functions in the pathway purine metabolism; IMP biosynthesis via de novo pathway; 5-amino-1-(5-phospho-D-ribosyl)imidazole from N(2)-formyl-N(1)-(5-phospho-D-ribosyl)glycinamide: step 2/2. Its pathway is purine metabolism; IMP biosynthesis via de novo pathway; N(1)-(5-phospho-D-ribosyl)glycinamide from 5-phospho-alpha-D-ribose 1-diphosphate: step 2/2. Its function is as follows. Catalyzes the second and fifth step in the 'de novo' purine biosynthesis pathway; contains phosphoribosylamine--glycine ligase (GARS) and phosphoribosylformylglycinamidine cyclo-ligase (AIRS) activities. This is Bifunctional purine biosynthetic protein ADE5,7 from Saccharomyces cerevisiae (strain ATCC 204508 / S288c) (Baker's yeast).